The primary structure comprises 147 residues: UPF0306 protein YhbP (147 aa).

Belongs to the UPF0306 family.

This Escherichia coli O157:H7 protein is UPF0306 protein YhbP.